The chain runs to 252 residues: Imidazole glycerol phosphate synthase subunit HisF (252 aa).

Catalysis depends on residues aspartate 11 and aspartate 130.

The protein belongs to the HisA/HisF family. In terms of assembly, heterodimer of HisH and HisF.

It is found in the cytoplasm. It catalyses the reaction 5-[(5-phospho-1-deoxy-D-ribulos-1-ylimino)methylamino]-1-(5-phospho-beta-D-ribosyl)imidazole-4-carboxamide + L-glutamine = D-erythro-1-(imidazol-4-yl)glycerol 3-phosphate + 5-amino-1-(5-phospho-beta-D-ribosyl)imidazole-4-carboxamide + L-glutamate + H(+). The protein operates within amino-acid biosynthesis; L-histidine biosynthesis; L-histidine from 5-phospho-alpha-D-ribose 1-diphosphate: step 5/9. Functionally, IGPS catalyzes the conversion of PRFAR and glutamine to IGP, AICAR and glutamate. The HisF subunit catalyzes the cyclization activity that produces IGP and AICAR from PRFAR using the ammonia provided by the HisH subunit. This Bacillus anthracis (strain CDC 684 / NRRL 3495) protein is Imidazole glycerol phosphate synthase subunit HisF.